Reading from the N-terminus, the 317-residue chain is tRNA pseudouridine synthase B (317 aa).

Residue Asp47 is the Nucleophile of the active site.

This sequence belongs to the pseudouridine synthase TruB family. Type 1 subfamily.

It catalyses the reaction uridine(55) in tRNA = pseudouridine(55) in tRNA. In terms of biological role, responsible for synthesis of pseudouridine from uracil-55 in the psi GC loop of transfer RNAs. This Shewanella denitrificans (strain OS217 / ATCC BAA-1090 / DSM 15013) protein is tRNA pseudouridine synthase B.